The primary structure comprises 775 residues: Chloride channel protein CLC-a (775 aa).

Positions 1–28 (MDEDGNLQISNSNYNGEEEGEDPENNTL) are disordered. 12 helical membrane-spanning segments follow: residues 88-108 (TLAC…NLAV), 131-151 (GLMV…VLVV), 178-198 (FGFT…AAGL), 206-226 (LVHI…DNHR), 248-268 (GSAS…LFAL), 278-298 (ALLW…RAFI), 328-348 (AADI…GSLY), 371-391 (VLLS…LPFL), 453-473 (MVSL…TFGI), 478-498 (GLFL…GTAM), 510-530 (AVLG…SLCV), and 531-551 (IFLE…VLLI). 2 CBS domains span residues 595-658 (AKPP…FLNE) and 703-768 (TNTT…HLDK). The chain crosses the membrane as a helical span at residues 730 to 750 (HLLVVPKIQASGMSPVIGILT).

This sequence belongs to the chloride channel (TC 2.A.49) family. As to quaternary structure, homodimer. Interacts with PP2A5. Broadly expressed in the plant.

It is found in the membrane. Voltage-gated chloride channel that could play a role in the regulation of nitrate content. This chain is Chloride channel protein CLC-a (CLC-A), found in Arabidopsis thaliana (Mouse-ear cress).